The sequence spans 1391 residues: DNA-directed RNA polymerase subunit beta' (1391 aa).

Zn(2+) is bound by residues Cys-72, Cys-74, Cys-87, and Cys-90. Residues Asp-462, Asp-464, and Asp-466 each contribute to the Mg(2+) site. 4 residues coordinate Zn(2+): Cys-816, Cys-890, Cys-897, and Cys-900.

It belongs to the RNA polymerase beta' chain family. In terms of assembly, the RNAP catalytic core consists of 2 alpha, 1 beta, 1 beta' and 1 omega subunit. When a sigma factor is associated with the core the holoenzyme is formed, which can initiate transcription. Requires Mg(2+) as cofactor. It depends on Zn(2+) as a cofactor.

The catalysed reaction is RNA(n) + a ribonucleoside 5'-triphosphate = RNA(n+1) + diphosphate. In terms of biological role, DNA-dependent RNA polymerase catalyzes the transcription of DNA into RNA using the four ribonucleoside triphosphates as substrates. The protein is DNA-directed RNA polymerase subunit beta' of Neisseria meningitidis serogroup C (strain 053442).